The chain runs to 249 residues: Isoprenyl transferase (249 aa).

The active site involves Asp25. Residue Asp25 coordinates Mg(2+). Substrate-binding positions include 26 to 29, Trp30, Arg38, His42, and 70 to 72; these read GNGR and STE. Asn73 serves as the catalytic Proton acceptor. Residues Trp74, Arg76, Arg197, and 203-205 each bind substrate; that span reads RLS. Glu216 serves as a coordination point for Mg(2+).

Belongs to the UPP synthase family. In terms of assembly, homodimer. Mg(2+) serves as cofactor.

Catalyzes the condensation of isopentenyl diphosphate (IPP) with allylic pyrophosphates generating different type of terpenoids. The polypeptide is Isoprenyl transferase (Streptococcus pyogenes serotype M6 (strain ATCC BAA-946 / MGAS10394)).